Here is a 156-residue protein sequence, read N- to C-terminus: MGPKLLESRLCLLLLLGLVLMLASCLGQTPSQWFAIQHINNNANLQCNVEMQRINRFRRTCKGLNTFLHTSFANAVGVCGNPSGLCSDNISRNCHNSSSRVRITVCNITSRRRTPYTQCRYQPRRSLEYYTVACNPRTPQDSPMYPVVPVHLDGTF.

The first 25 residues, 1 to 25 (MGPKLLESRLCLLLLLGLVLMLASC), serve as a signal peptide directing secretion. The Proton acceptor role is filled by histidine 38. Cystine bridges form between cysteine 47–cysteine 106, cysteine 61–cysteine 119, cysteine 79–cysteine 134, and cysteine 86–cysteine 94. 62–66 (KGLNT) contacts substrate. N-linked (GlcNAc...) asparagine glycosylation is found at asparagine 89, asparagine 96, and asparagine 107. Histidine 151 acts as the Proton donor in catalysis.

Belongs to the pancreatic ribonuclease family.

The protein localises to the cytoplasmic granule. Its function is as follows. Cytotoxin and helminthotoxin with ribonuclease activity. Selectively chemotactic for dendritic cells. Possesses a wide variety of biological activities. The sequence is that of Eosinophil cationic protein 2 (Ear2) from Mus musculus (Mouse).